The primary structure comprises 155 residues: MAKGEGHILAQNKKARHDYHIVETVEAGIVLTGTEIKSVRAARIQLKDGFAQIKNGEAWLVNVHIAPFEQGNIWNADPERTRKLLLKKREITHLANELKGSGMTLAPLKVYLKDGFAKVLIGLAKGKHEYDKRETIKRRDQERDIKKQMKHYNAR.

Over residues 135–147 (TIKRRDQERDIKK) the composition is skewed to basic and acidic residues. Residues 135 to 155 (TIKRRDQERDIKKQMKHYNAR) form a disordered region.

It belongs to the SmpB family.

It localises to the cytoplasm. In terms of biological role, required for rescue of stalled ribosomes mediated by trans-translation. Binds to transfer-messenger RNA (tmRNA), required for stable association of tmRNA with ribosomes. tmRNA and SmpB together mimic tRNA shape, replacing the anticodon stem-loop with SmpB. tmRNA is encoded by the ssrA gene; the 2 termini fold to resemble tRNA(Ala) and it encodes a 'tag peptide', a short internal open reading frame. During trans-translation Ala-aminoacylated tmRNA acts like a tRNA, entering the A-site of stalled ribosomes, displacing the stalled mRNA. The ribosome then switches to translate the ORF on the tmRNA; the nascent peptide is terminated with the 'tag peptide' encoded by the tmRNA and targeted for degradation. The ribosome is freed to recommence translation, which seems to be the essential function of trans-translation. In Streptococcus pyogenes serotype M12 (strain MGAS2096), this protein is SsrA-binding protein.